A 193-amino-acid chain; its full sequence is Ion-translocating oxidoreductase complex subunit A (193 aa).

6 consecutive transmembrane segments (helical) span residues 5–25 (LLLLIGTVLVNNFVLVKFLGL), 39–59 (IGMGLATTFVLTLASVCAYLV), 67–87 (LGIEYLRTMSFILVIAVVVQF), 102–122 (LLGIFLPLITTNCAVLGVALL), 134–154 (IIYGFGAAVGFSLVLILFASM), and 171–191 (SIAMITAGLMSLAFMGFTGLV).

This sequence belongs to the NqrDE/RnfAE family. As to quaternary structure, the complex is composed of six subunits: RnfA, RnfB, RnfC, RnfD, RnfE and RnfG.

The protein localises to the cell inner membrane. Functionally, part of a membrane-bound complex that couples electron transfer with translocation of ions across the membrane. This chain is Ion-translocating oxidoreductase complex subunit A, found in Vibrio cholerae serotype O1 (strain ATCC 39315 / El Tor Inaba N16961).